The chain runs to 163 residues: Staphylokinase (163 aa).

Residues 1 to 27 (MLKRSLLFLTVLLLLFSFSSITNEVSA) form the signal peptide.

Belongs to the staphylokinase family.

The protein localises to the secreted. Its function is as follows. Potent plasminogen activator that converts plasminogen into plasmin. It forms a 1:1 complex with plasmin, which in turn activates other plasminogen molecules. In Staphylococcus aureus (Bacteriophage P42D), this protein is Staphylokinase (sak).